Here is a 360-residue protein sequence, read N- to C-terminus: Lactosylceramide 4-alpha-galactosyltransferase (360 aa).

The Cytoplasmic portion of the chain corresponds to M1–R30. Residues V31 to W51 traverse the membrane as a helical; Signal-anchor for type II membrane protein segment. Topologically, residues H52 to L360 are lumenal. Residues D199–D201 carry the DXD motif motif. Residues N210 and N316 are each glycosylated (N-linked (GlcNAc...) asparagine).

This sequence belongs to the glycosyltransferase 32 family. Ubiquitous. Highly expressed in kidney, mesenteric lymph node, spleen and brain.

The protein resides in the golgi apparatus membrane. The enzyme catalyses a beta-D-Gal-(1-&gt;4)-beta-D-Glc-(1&lt;-&gt;1)-Cer(d18:1(4E)) + UDP-alpha-D-galactose = a globoside Gb3Cer (d18:1(4E)) + UDP + H(+). The catalysed reaction is a beta-D-Gal-(1&lt;-&gt;1')-ceramide + UDP-alpha-D-galactose = alpha-D-Gal-(1-&gt;4)-beta-D-Gal-(1&lt;-&gt;1')-Cer + UDP + H(+). The protein operates within glycolipid biosynthesis. Functionally, catalyzes the transfer of galactose from UDP-alpha-D-galactose to lactosylceramide/beta-D-galactosyl-(1-&gt;4)-beta-D-glucosyl-(1&lt;-&gt;1)-ceramide(d18:1(4E)) to produce globotriaosylceramide/globoside Gb3Cer (d18:1(4E)). Also able to transfer galactose to galactosylceramide/beta-D-Gal-(1&lt;-&gt;1')-Cer. Globoside Gb3Cer is a glycosphingolipid of the globo serie, one of the major types of neutral root structures of glycosphingolipids, that constitute a significant portion of mammalian cell membranes. The protein is Lactosylceramide 4-alpha-galactosyltransferase of Rattus norvegicus (Rat).